The chain runs to 186 residues: MYVIVGLGNPDKKYEHTRHNIGFDVIDALADKYNISVTDKKHKALCGSGVIEGMKVLLVKPQTYMNLSGESVAEVMNFYKLDPDEEMIVIFDDISLEPGRIRIRKKGSAGGHNGIKSIIAMTGTQGFSRIKVGVGEKPQGWDLADHVLGRFSSEDRAKVEEAIGHAMDAAVLMMQGETDKAMNIYN.

Tyr14 contacts tRNA. His19 serves as the catalytic Proton acceptor. TRNA is bound by residues Tyr64, Asn66, and Asn113.

It belongs to the PTH family. Monomer.

It localises to the cytoplasm. It carries out the reaction an N-acyl-L-alpha-aminoacyl-tRNA + H2O = an N-acyl-L-amino acid + a tRNA + H(+). In terms of biological role, hydrolyzes ribosome-free peptidyl-tRNAs (with 1 or more amino acids incorporated), which drop off the ribosome during protein synthesis, or as a result of ribosome stalling. Catalyzes the release of premature peptidyl moieties from peptidyl-tRNA molecules trapped in stalled 50S ribosomal subunits, and thus maintains levels of free tRNAs and 50S ribosomes. This Agathobacter rectalis (strain ATCC 33656 / DSM 3377 / JCM 17463 / KCTC 5835 / VPI 0990) (Eubacterium rectale) protein is Peptidyl-tRNA hydrolase.